Reading from the N-terminus, the 92-residue chain is PqqA binding protein (92 aa).

Belongs to the PqqD family. In terms of assembly, monomer. Interacts with PqqE.

It participates in cofactor biosynthesis; pyrroloquinoline quinone biosynthesis. Its function is as follows. Functions as a PqqA binding protein and presents PqqA to PqqE, in the pyrroloquinoline quinone (PQQ) biosynthetic pathway. This is PqqA binding protein from Xanthomonas campestris pv. campestris (strain 8004).